Consider the following 404-residue polypeptide: uncharacterized protein (404 aa).

A run of 2 helical transmembrane segments spans residues 35 to 55 (ILFS…FTFL) and 92 to 112 (EDIW…ISSI).

Its subcellular location is the membrane. This is an uncharacterized protein from Saccharomyces cerevisiae (strain ATCC 204508 / S288c) (Baker's yeast).